A 146-amino-acid polypeptide reads, in one-letter code: uncharacterized protein (146 aa).

A helical transmembrane segment spans residues 7–27; that stretch reads FVLSITIVLVILIIIAYIWYN.

It belongs to the asfivirus E146L family.

Its subcellular location is the host membrane. It is found in the virion. This is an uncharacterized protein from Ornithodoros (relapsing fever ticks).